The chain runs to 185 residues: Alkyl hydroperoxide reductase AhpD (185 aa).

Catalysis depends on cysteine 131, which acts as the Proton donor. The cysteines at positions 131 and 134 are disulfide-linked. The Cysteine sulfenic acid (-SOH) intermediate role is filled by cysteine 134.

It belongs to the AhpD family. In terms of assembly, homotrimer.

It carries out the reaction N(6)-[(R)-dihydrolipoyl]-L-lysyl-[lipoyl-carrier protein] + a hydroperoxide = N(6)-[(R)-lipoyl]-L-lysyl-[lipoyl-carrier protein] + an alcohol + H2O. Antioxidant protein with alkyl hydroperoxidase activity. Required for the reduction of the AhpC active site cysteine residues and for the regeneration of the AhpC enzyme activity. The polypeptide is Alkyl hydroperoxide reductase AhpD (Frankia alni (strain DSM 45986 / CECT 9034 / ACN14a)).